The sequence spans 238 residues: CS1 fimbrial subunit B (238 aa).

Positions Met1–Ala17 are cleaved as a signal peptide.

The protein resides in the fimbrium. In terms of biological role, might function as a shuttle protein in the transport of fimbria through the periplasmic space or might function as an adhesin. This is CS1 fimbrial subunit B (csoB) from Escherichia coli.